A 159-amino-acid polypeptide reads, in one-letter code: MSKKKPQQSSNTIARNKKARHEYFLEDKFEAGVSLQGWEIKSIRAGKVNISDSYVIIKNGEAYLLGAEIQPLNQASSHVYCEPDRSRKLLLKRRELDKLIGASEREGYSIVATTIYWKGPWAKLEIFLAQGKKSHDKRDTIKERDWQRQKARIMKHSVR.

The protein belongs to the SmpB family.

The protein resides in the cytoplasm. Required for rescue of stalled ribosomes mediated by trans-translation. Binds to transfer-messenger RNA (tmRNA), required for stable association of tmRNA with ribosomes. tmRNA and SmpB together mimic tRNA shape, replacing the anticodon stem-loop with SmpB. tmRNA is encoded by the ssrA gene; the 2 termini fold to resemble tRNA(Ala) and it encodes a 'tag peptide', a short internal open reading frame. During trans-translation Ala-aminoacylated tmRNA acts like a tRNA, entering the A-site of stalled ribosomes, displacing the stalled mRNA. The ribosome then switches to translate the ORF on the tmRNA; the nascent peptide is terminated with the 'tag peptide' encoded by the tmRNA and targeted for degradation. The ribosome is freed to recommence translation, which seems to be the essential function of trans-translation. The protein is SsrA-binding protein of Idiomarina loihiensis (strain ATCC BAA-735 / DSM 15497 / L2-TR).